The chain runs to 322 residues: Manganese-dependent ADP-ribose/CDP-alcohol diphosphatase (322 aa).

Zn(2+) is bound by residues D13, Q15, D60, N96, H228, H265, and H267.

The protein belongs to the ADPRibase-Mn family. In terms of assembly, monomer. Requires Mg(2+) as cofactor.

It carries out the reaction CDP-choline + H2O = phosphocholine + CMP + 2 H(+). It catalyses the reaction ADP-D-ribose + H2O = D-ribose 5-phosphate + AMP + 2 H(+). The catalysed reaction is CDP-glycerol + H2O = sn-glycerol 3-phosphate + CMP + 2 H(+). In terms of biological role, hydrolyzes ADP-ribose, IDP-ribose, CDP-glycerol, CDP-choline and CDP-ethanolamine, but not other non-reducing ADP-sugars or CDP-glucose. This chain is Manganese-dependent ADP-ribose/CDP-alcohol diphosphatase (adprm), found in Danio rerio (Zebrafish).